A 1052-amino-acid polypeptide reads, in one-letter code: Focal adhesion kinase 1 (1052 aa).

Positions 1 to 27 (MAAAYLDPNLNHTPNSSTKTHLGTGME) are disordered. At Ala2 the chain carries N-acetylalanine. Position 5 is a phosphotyrosine (Tyr5). A compositionally biased stretch (polar residues) spans 10 to 21 (LNHTPNSSTKTH). Residue Thr13 is modified to Phosphothreonine. A phosphoserine mark is found at Ser29 and Ser54. One can recognise an FERM domain in the interval 35–355 (RVLKVFHYFE…GYCRLVNGTS (321 aa)). Residue Lys152 forms a Glycyl lysine isopeptide (Lys-Gly) (interchain with G-Cter in SUMO) linkage. Phosphotyrosine; by autocatalysis is present on Tyr397. A Phosphotyrosine modification is found at Tyr407. Positions 422-680 (IELGRCIGEG…ELKAQLSTIL (259 aa)) constitute a Protein kinase domain. ATP-binding positions include 428–434 (IGEGQFG), Lys454, and 500–502 (ELC). Asp546 serves as the catalytic Proton acceptor. At Tyr570 the chain carries Phosphotyrosine. Tyr576 and Tyr577 each carry phosphotyrosine; by RET and SRC. Ser580 bears the Phosphoserine mark. Residues 684–697 (KAQQEERMRMESRR) show a composition bias toward basic and acidic residues. Disordered stretches follow at residues 684–734 (KAQQ…PSPQ) and 839–922 (LSRG…RSND). Residues 707–1052 (GSDEAPPKPS…LKMLGQTRPH (346 aa)) form an interaction with TGFB1I1 region. Ser722 carries the post-translational modification Phosphoserine. Residue Ser732 is modified to Phosphoserine; by CDK5. Residues 839–849 (LSRGSIDREDG) are compositionally biased toward basic and acidic residues. A Phosphoserine modification is found at Ser843. Position 861 is a phosphotyrosine (Tyr861). A compositionally biased stretch (pro residues) spans 869 to 880 (PAAPPKKPPRPG). Phosphoserine is present on residues Ser887 and Ser910. The interaction with ARHGEF28 stretch occupies residues 912–1052 (PPTANLDRSN…LKMLGQTRPH (141 aa)). Thr914 carries the post-translational modification Phosphothreonine. Residue Tyr925 is modified to Phosphotyrosine.

The protein belongs to the protein kinase superfamily. Tyr protein kinase family. FAK subfamily. In terms of assembly, interacts (via first Pro-rich region) with CAS family members (via SH3 domain), including BCAR1, BCAR3, and CASS4. Interacts with NEDD9 (via SH3 domain). Interacts with GIT1. Interacts with SORBS1. Interacts with ARHGEF28. Interacts with SHB. Part of a complex composed of THSD1, PTK2/FAK1, TLN1 and VCL. Interacts with PXN and TLN1. Interacts with STAT1. Interacts with DCC. Interacts with WASL. Interacts with ARHGEF7. Interacts with GRB2 and GRB7. Component of a complex that contains at least FER, CTTN and PTK2/FAK1. Interacts with BMX. Interacts with TGFB1I1. Interacts with STEAP4. Interacts with ZFYVE21. Interacts with ESR1. Interacts with PIK3R1 or PIK3R2. Interacts with SRC, FGR, FLT4 and RET. Interacts with EPHA2 in resting cells; activation of EPHA2 recruits PTPN11, leading to dephosphorylation of PTK2/FAK1 and dissociation of the complex. Interacts with EPHA1 (kinase activity-dependent). Interacts with CD4; this interaction requires the presence of HIV-1 gp120. Interacts with PIAS1. Interacts with ARHGAP26 and SHC1. Interacts with RB1CC1; this inhibits PTK2/FAK1 activity and activation of downstream signaling pathways. Interacts with P53/TP53 and MDM2. Interacts with LPXN (via LD motif 3). Interacts with MISP. Interacts with CIB1 isoform 2. Interacts with CD36. Interacts with EMP2; regulates PTK2 activation and localization. Interacts with DSCAM. Interacts with AMBRA1. Interacts (when tyrosine-phosphorylated) with tensin TNS1; the interaction is increased by phosphorylation of TNS1. Post-translationally, phosphorylated on tyrosine residues upon activation, e.g. upon integrin signaling. Tyr-397 is the major autophosphorylation site, but other kinases can also phosphorylate this residue. Phosphorylation at Tyr-397 promotes interaction with SRC and SRC family members, leading to phosphorylation at Tyr-576, Tyr-577 and at additional tyrosine residues. FGR promotes phosphorylation at Tyr-397 and Tyr-576. FER promotes phosphorylation at Tyr-577, Tyr-861 and Tyr-925, even when cells are not adherent. Tyr-397, Tyr-576 and Ser-722 are phosphorylated only when cells are adherent. Phosphorylation at Tyr-397 is important for interaction with BMX, PIK3R1 and SHC1. Phosphorylation at Tyr-925 is important for interaction with GRB2. Dephosphorylated by PTPN11; PTPN11 is recruited to PTK2 via EPHA2 (tyrosine phosphorylated). Microtubule-induced dephosphorylation at Tyr-397 is crucial for the induction of focal adhesion disassembly; this dephosphorylation could be catalyzed by PTPN11 and regulated by ZFYVE21. Phosphorylation on tyrosine residues is enhanced by NTN1. In terms of processing, sumoylated; this enhances autophosphorylation. In terms of tissue distribution, detected in B and T-lymphocytes. Isoform 1 and isoform 6 are detected in lung fibroblasts (at protein level). Ubiquitous. Expressed in epithelial cells (at protein level).

The protein resides in the cell junction. It is found in the focal adhesion. The protein localises to the cell membrane. It localises to the cytoplasm. Its subcellular location is the perinuclear region. The protein resides in the cell cortex. It is found in the cytoskeleton. The protein localises to the microtubule organizing center. It localises to the centrosome. Its subcellular location is the nucleus. The protein resides in the cilium basal body. The catalysed reaction is L-tyrosyl-[protein] + ATP = O-phospho-L-tyrosyl-[protein] + ADP + H(+). With respect to regulation, subject to autoinhibition, mediated by interactions between the FERM domain and the kinase domain. Activated by autophosphorylation at Tyr-397. This promotes interaction with SRC and phosphorylation at Tyr-576 and Tyr-577 in the kinase activation loop. Phosphorylation at Tyr-576 and Tyr-577 is required for maximal kinase activity. Inhibited by TAC544, TAE226, PF-573,228 and PF-562,271. Non-receptor protein-tyrosine kinase that plays an essential role in regulating cell migration, adhesion, spreading, reorganization of the actin cytoskeleton, formation and disassembly of focal adhesions and cell protrusions, cell cycle progression, cell proliferation and apoptosis. Required for early embryonic development and placenta development. Required for embryonic angiogenesis, normal cardiomyocyte migration and proliferation, and normal heart development. Regulates axon growth and neuronal cell migration, axon branching and synapse formation; required for normal development of the nervous system. Plays a role in osteogenesis and differentiation of osteoblasts. Functions in integrin signal transduction, but also in signaling downstream of numerous growth factor receptors, G-protein coupled receptors (GPCR), EPHA2, netrin receptors and LDL receptors. Forms multisubunit signaling complexes with SRC and SRC family members upon activation; this leads to the phosphorylation of additional tyrosine residues, creating binding sites for scaffold proteins, effectors and substrates. Regulates numerous signaling pathways. Promotes activation of phosphatidylinositol 3-kinase and the AKT1 signaling cascade. Promotes activation of MAPK1/ERK2, MAPK3/ERK1 and the MAP kinase signaling cascade. Promotes localized and transient activation of guanine nucleotide exchange factors (GEFs) and GTPase-activating proteins (GAPs), and thereby modulates the activity of Rho family GTPases. Signaling via CAS family members mediates activation of RAC1. Phosphorylates NEDD9 following integrin stimulation. Recruits the ubiquitin ligase MDM2 to P53/TP53 in the nucleus, and thereby regulates P53/TP53 activity, P53/TP53 ubiquitination and proteasomal degradation. Phosphorylates SRC; this increases SRC kinase activity. Phosphorylates ACTN1, ARHGEF7, GRB7, RET and WASL. Promotes phosphorylation of PXN and STAT1; most likely PXN and STAT1 are phosphorylated by a SRC family kinase that is recruited to autophosphorylated PTK2/FAK1, rather than by PTK2/FAK1 itself. Promotes phosphorylation of BCAR1; GIT2 and SHC1; this requires both SRC and PTK2/FAK1. Promotes phosphorylation of BMX and PIK3R1. Isoform 6 (FRNK) does not contain a kinase domain and inhibits PTK2/FAK1 phosphorylation and signaling. Its enhanced expression can attenuate the nuclear accumulation of LPXN and limit its ability to enhance serum response factor (SRF)-dependent gene transcription. In terms of biological role, isoform 6 (FRNK) does not contain a kinase domain and inhibits PTK2/FAK1 phosphorylation and signaling. Its enhanced expression can attenuate the nuclear accumulation of LPXN and limit its ability to enhance serum response factor (SRF)-dependent gene transcription. The protein is Focal adhesion kinase 1 of Homo sapiens (Human).